Here is a 217-residue protein sequence, read N- to C-terminus: Ribonuclease T (217 aa).

The 175-residue stretch at 20-194 folds into the Exonuclease domain; it reads VVIDIETAGF…YDTQQTANLF (175 aa). Residues Asp-23, Glu-25, His-181, and Asp-186 each contribute to the Mg(2+) site. Catalysis depends on His-181, which acts as the Proton donor/acceptor.

This sequence belongs to the RNase T family. In terms of assembly, homodimer. The cofactor is Mg(2+).

Its function is as follows. Trims short 3' overhangs of a variety of RNA species, leaving a one or two nucleotide 3' overhang. Responsible for the end-turnover of tRNA: specifically removes the terminal AMP residue from uncharged tRNA (tRNA-C-C-A). Also appears to be involved in tRNA biosynthesis. The protein is Ribonuclease T of Buchnera aphidicola subsp. Baizongia pistaciae (strain Bp).